Reading from the N-terminus, the 252-residue chain is Low-density lipoprotein receptor-related protein 5-like protein (252 aa).

5 LDL-receptor class B repeats span residues 3 to 45 (GHVY…NWVA), 46 to 88 (RSLY…HPEM), 89 to 132 (GLTY…DLQE), 133 to 175 (GKLY…LGDF), and 176 to 218 (IYWT…DKVV). The tract at residues 223 to 247 (HADRNGGAATCASSRPTQPGLAAPS) is disordered.

The polypeptide is Low-density lipoprotein receptor-related protein 5-like protein (LRP5L) (Homo sapiens (Human)).